We begin with the raw amino-acid sequence, 342 residues long: Phosphate acyltransferase (342 aa).

This sequence belongs to the PlsX family. As to quaternary structure, homodimer. Probably interacts with PlsY.

It localises to the cytoplasm. The enzyme catalyses a fatty acyl-[ACP] + phosphate = an acyl phosphate + holo-[ACP]. It functions in the pathway lipid metabolism; phospholipid metabolism. Its function is as follows. Catalyzes the reversible formation of acyl-phosphate (acyl-PO(4)) from acyl-[acyl-carrier-protein] (acyl-ACP). This enzyme utilizes acyl-ACP as fatty acyl donor, but not acyl-CoA. The protein is Phosphate acyltransferase of Shewanella sediminis (strain HAW-EB3).